Consider the following 203-residue polypeptide: Holliday junction branch migration complex subunit RuvA (203 aa).

A domain I region spans residues 1–62; the sequence is MYEYFLGQVT…ENGMSLFGFF (62 aa). The domain II stretch occupies residues 63–141; that stretch reads DADEKALFEK…DLNVDVTGQT (79 aa). The tract at residues 142-148 is flexible linker; sequence ALDVDAP. A domain III region spans residues 149–203; that stretch reads AVDGALADALAALEALGYSKADVKKVTKKLETFSQTQGADTNTLLSEGLRLLMKK.

Belongs to the RuvA family. Homotetramer. Forms an RuvA(8)-RuvB(12)-Holliday junction (HJ) complex. HJ DNA is sandwiched between 2 RuvA tetramers; dsDNA enters through RuvA and exits via RuvB. An RuvB hexamer assembles on each DNA strand where it exits the tetramer. Each RuvB hexamer is contacted by two RuvA subunits (via domain III) on 2 adjacent RuvB subunits; this complex drives branch migration. In the full resolvosome a probable DNA-RuvA(4)-RuvB(12)-RuvC(2) complex forms which resolves the HJ.

It is found in the cytoplasm. The RuvA-RuvB-RuvC complex processes Holliday junction (HJ) DNA during genetic recombination and DNA repair, while the RuvA-RuvB complex plays an important role in the rescue of blocked DNA replication forks via replication fork reversal (RFR). RuvA specifically binds to HJ cruciform DNA, conferring on it an open structure. The RuvB hexamer acts as an ATP-dependent pump, pulling dsDNA into and through the RuvAB complex. HJ branch migration allows RuvC to scan DNA until it finds its consensus sequence, where it cleaves and resolves the cruciform DNA. This chain is Holliday junction branch migration complex subunit RuvA, found in Lactiplantibacillus plantarum (strain ATCC BAA-793 / NCIMB 8826 / WCFS1) (Lactobacillus plantarum).